The sequence spans 92 residues: Elongation factor 1-beta (92 aa).

It belongs to the EF-1-beta/EF-1-delta family.

In terms of biological role, promotes the exchange of GDP for GTP in EF-1-alpha/GDP, thus allowing the regeneration of EF-1-alpha/GTP that could then be used to form the ternary complex EF-1-alpha/GTP/AAtRNA. The polypeptide is Elongation factor 1-beta (Pyrobaculum arsenaticum (strain DSM 13514 / JCM 11321 / PZ6)).